The following is a 690-amino-acid chain: Molting protein mlt-10 (690 aa).

An N-terminal signal peptide occupies residues 1–18; that stretch reads MRNLNLILFTALAAVTYA. N-linked (GlcNAc...) asparagine glycosylation is found at asparagine 42 and asparagine 204. The stretch at 219-285 forms a coiled coil; it reads IKKLGEEAKR…MRKKEADEIR (67 aa). N-linked (GlcNAc...) asparagine glycosylation is found at asparagine 305 and asparagine 415. 5 consecutive transmembrane segments (helical) span residues 514–534, 544–564, 579–599, 618–638, and 643–663; these read PFILTPLTFASAPLSNTFIVL, LSPAVLGPIILSPWVFVPLIL, FSPIILSPLVLHPLILVPGVF, VFTPLILSPFALNPLILTPMV, and ILSPFVLSPIILSPQALFAVV.

The protein belongs to the mlt-10-like family. Expressed in the major body hypodermal syncytium (Hyp7), the dorsal and ventral ridges of the hypodermis, hypodermal cells in the head and tail, and the pharyngeal myoepithelium, but not the lateral seam cells.

It is found in the membrane. It localises to the secreted. Its function is as follows. Required for the efficient removal of larval cuticles during the molting cycle as well as the synthesis of new cuticles. The chain is Molting protein mlt-10 from Caenorhabditis elegans.